The primary structure comprises 351 residues: Histidinol-phosphate aminotransferase (351 aa).

Lys213 carries the post-translational modification N6-(pyridoxal phosphate)lysine.

The protein belongs to the class-II pyridoxal-phosphate-dependent aminotransferase family. Histidinol-phosphate aminotransferase subfamily. As to quaternary structure, homodimer. Requires pyridoxal 5'-phosphate as cofactor.

The enzyme catalyses L-histidinol phosphate + 2-oxoglutarate = 3-(imidazol-4-yl)-2-oxopropyl phosphate + L-glutamate. Its pathway is amino-acid biosynthesis; L-histidine biosynthesis; L-histidine from 5-phospho-alpha-D-ribose 1-diphosphate: step 7/9. The chain is Histidinol-phosphate aminotransferase from Clostridium kluyveri (strain NBRC 12016).